Reading from the N-terminus, the 2316-residue chain is MRILQSFLACVQLLCVCRLDWAYGYYRQQRKLVEEIGWSYTGALNQKNWGKKYPICNSPKQSPINIDEDLTQVNVNLKKLKFQGWEKPSLENTFIHNTGKTVEINLTNDYYLSGGLSEKVFKASKMTFHWGKCNVSSEGSEHSLEGQKFPLEMQIYCFDADRFSSFEETVKGKGRLRALSILFEIGVEENLDYKAIIDGTESVSRFGKQAALDPFILQNLLPNSTDKYYIYNGSLTSPPCTDTVEWIVFKDTVSISESQLAVFCEVLTMQQSGYVMLMDYLQNNFREQQYKFSRQVFSSYTGKEEIHEAVCSSEPENVQADPENYTSLLITWERPRVVYDTMIEKFAVLYQPLEGNDQTKHEFLTDGYQDLGAILNNLIPNMSYVLQIVAICSNGLYGKYSDQLIVDMPTEDAELDLFPELIGTEEIIKEENYGKGNEEDTGLNPGRDSATNQIRKKEPQVSTTTHYNHMGTKYNEAKTNRSPTRGSEFSGKSDVLNTSLNPTSQQVAEFNPEREMSLPSQIGTNLPPHSVEGTSASLNSGSKTLLVFPQMNLSGTAESLNMVSITEYKEVSADLSEEENLLTDFKLDSGADDSSGSSPASSTVPFSTDNLSHGYTSSSDTPEAVTYDVLRPESTRNALEDSAPSGSEESLKDPSLEGSVWFPGSTDLTTQSETGSGREGFLQVNSTDFQVDESRETTETFSPDATASRGPSVTDMEMPHYSTFAYPPTEVTSHAFTPSSRPLDLAPTSNILHSQTTQPVYNGETPLQPSYSSEVFPLVTPLLLDNQTLNTTPAASSSDSALHATPVFPSVGVSFDSILSSYDDAPLLPFSSASFSSDLFHHLHTVSQTLPQVTSAAERDELSLHASLLVAGGDLLLEPSLVQYSDVMSHQVTIHAASDTLEFGSESAVLYKTSMVSQIESPSSDVVMHAYSSGPETSYAIEGSHHVLTVSSSSAIPVHDSVGVADQGSLLINPSHISLPESSFITPTASLLQLPPALSGDGEWSGASSDSELLLPDTDGLRTLNMSSPVSVADFTYTTSVSGDDIKPLSKGEMMYGNETELKMSSFSDMAYPSKSTVVPKMSDIVNKWSESLKETSVSVSSINSVFTESLVYPITKVFDQEISRVPEIIFPVKPTHTASQASGDTWLKPGLSTNSEPALSDTASSEVSHPSTQPLLYEAASPFNTEALLQPSFPASDVDTLLKTALPSGPRDPVLTETPMVEQSSSSVSLPLASESASSKSTLHFTSVPVLNMSPSDVHPTSLQRLTVPHSREEYFEQGLLKSKSPQQVLPSLHSHDEFFQTAHLDISQAYPPKGRHAFATPILSINEPQNTLINRLVYSEDIFMHPEISITDKALTGLPTTVSDVLIATDHSVPLGSGPISMTTVSPNRDDSVTTTKLLLPSKATSKPTHSARSDADLVGGGEDGDDYDDDDYDDIDSDRFPVNKCMSCSPYRESQEKVMNDSDTQESSLVDQSDPISHLLSENTEEENGGTGVTRVDKSPDKSPPPSMLPQKHNDGREDRDIQMGSAVLPHTPGSKAWAVLTSDEESGSGQGTSDSLNDNETSTDFSFPDVNEKDADGVLEADDTGIAPGSPRSSTPSVTSGHSGVSNSSEAEASNSSHESRIGLAEGLESEKKAVIPLVIVSALTFICLVVLVGILIYWRKCFQTAHFYLEDNTSPRVISTPPTPIFPISDDIGAIPIKHFPKHVADLHASNGFTEEFETLKEFYQEVQSCTVDLGITADSSNHPDNKHKNRYVNIVAYDHSRVKLTQLAEKDGKLTDYINANYVDGYNRPKAYIAAQGPLKSTAEDFWRMIWEHNVEVIVMITNLVEKGRRKCDQYWPTDGSEEYGSFLVNQKNVQVLAYYTVRNFTLRNTKIKKGSQKGRSSGRLVTQYHYTQWPDMGVPEYSLPVLAFVRKTAQAKRHAVGPVVVHCSAGVGRTGTYIVLDSMLQQIQHEGTVNIFGFLKHIRSQRNYLVQTEEQYVFIHDTLVEAILSKETEVPDSHIHSYVNTLLIPGPSGKTKLEKQFQLLSQSNILQSDYSTALKQCNREKNRTSSIIPVERSRVGISSLSGEGTDYINASYIMGYYQSNEFIITQHPLLHTIKDFWRMIWDHNAQLVVMIPDGQNMAEDEFVYWPNKDEPINCESFKVTLMSEEHKCLSNEEKLIVQDFILEATQDDYVLEVRHFQCPKWPNPDSPISKTFELISIIKEEAANRDGPMIVHDEHGGVTAGTFCALTTLMHQLEKENSMDVYQVAKMINLMRPGVFTDIEQYQFLYKVVLSLVSTRQEENPSTSLDSNGAALPDGNIAESLESLV.

A signal peptide spans 1 to 24 (MRILQSFLACVQLLCVCRLDWAYG). Over 25-1637 (YYRQQRKLVE…LAEGLESEKK (1613 aa)) the chain is Extracellular. The region spanning 36–300 (IGWSYTGALN…KFSRQVFSSY (265 aa)) is the Alpha-carbonic anhydrase domain. Intrachain disulfides connect Cys56/Cys240 and Cys133/Cys264. N-linked (GlcNAc...) asparagine glycosylation is found at Asn105, Asn134, Asn223, Asn232, Asn324, Asn381, and Asn497. The Fibronectin type-III domain occupies 314 to 413 (EPENVQADPE…LIVDMPTEDA (100 aa)). 2 disordered regions span residues 433–499 (YGKG…LNTS) and 518–537 (LPSQ…TSAS). Asn552 carries an N-linked (GlcNAc...) asparagine glycan. Phosphoserine occurs at positions 572 and 576. 2 disordered regions span residues 586–624 (KLDS…TPEA) and 636–720 (RNAL…EMPH). Residues 592–602 (DDSSGSSPASS) show a composition bias toward low complexity. O-linked (Xyl...) (chondroitin sulfate) serine glycosylation is present at Ser595. Residues 603–621 (TVPFSTDNLSHGYTSSSDT) show a composition bias toward polar residues. N-linked (GlcNAc...) asparagine glycosylation is present at Asn610. Ser645 bears the Phosphoserine; alternate mark. Ser645 carries O-linked (Xyl...) (chondroitin sulfate) serine; alternate glycosylation. Ser647 is modified (phosphoserine). Polar residues predominate over residues 666–675 (TDLTTQSETG). N-linked (GlcNAc...) asparagine glycosylation occurs at Asn685. Residues 699 to 711 (ETFSPDATASRGP) show a composition bias toward polar residues. Residue Asn786 is glycosylated (N-linked (GlcNAc...) asparagine). Ser1005 carries O-linked (Xyl...) (chondroitin sulfate) serine glycosylation. 2 N-linked (GlcNAc...) asparagine glycosylation sites follow: Asn1025 and Asn1058. Disordered regions lie at residues 1141–1172 (QASG…SHPS), 1204–1228 (KTAL…SSSS), 1401–1521 (LLPS…DGRE), and 1545–1622 (TSDE…NSSH). A compositionally biased stretch (polar residues) spans 1152–1172 (LSTNSEPALSDTASSEVSHPS). The segment covering 1401 to 1413 (LLPSKATSKPTHS) has biased composition (polar residues). The span at 1425–1439 (EDGDDYDDDDYDDID) shows a compositional bias: acidic residues. A glycan (N-linked (GlcNAc...) asparagine) is linked at Asn1463. A compositionally biased stretch (polar residues) spans 1464–1478 (DSDTQESSLVDQSDP). O-linked (Xyl...) (chondroitin sulfate) serine glycans are attached at residues Ser1550 and Ser1552. Polar residues-rich tracts occupy residues 1555–1569 (GTSD…STDF) and 1595–1609 (PRSS…HSGV). Residue Asn1563 is glycosylated (N-linked (GlcNAc...) asparagine). Positions 1610 to 1621 (SNSSEAEASNSS) are enriched in low complexity. N-linked (GlcNAc...) asparagine glycosylation is found at Asn1611 and Asn1619. Residues 1638–1663 (AVIPLVIVSALTFICLVVLVGILIYW) traverse the membrane as a helical segment. Residues 1664-2316 (RKCFQTAHFY…NIAESLESLV (653 aa)) lie on the Cytoplasmic side of the membrane. Phosphothreonine occurs at positions 1685 and 1688. Tyrosine-protein phosphatase domains are found at residues 1718–1993 (FTEE…LVEA) and 2024–2283 (LEKQ…VLSL). Residues Asp1902, 1934–1940 (CSAGVGR), and Gln1978 each bind substrate. The active-site Phosphocysteine intermediate is Cys1934. Ser2056 carries the post-translational modification Phosphoserine.

It belongs to the protein-tyrosine phosphatase family. Receptor class 5 subfamily. In terms of assembly, interacts with tenascin. Interacts with N-CAM and NG-CAM. The carbonic-anhydrase like domain interacts with CNTN1 (contactin). Interacts with PTN. Interaction with PTN promotes formation of homooligomers; oligomerization impairs phosphatase activity. Interacts (via chondroitin sulfate chains) with MDK (via C-terminal); this interaction is inhibited by PTN; this interaction promotes neuronal migration. Nervous tissue specific.

Its subcellular location is the cell membrane. The protein resides in the secreted. The enzyme catalyses O-phospho-L-tyrosyl-[protein] + H2O = L-tyrosyl-[protein] + phosphate. In terms of biological role, protein tyrosine phosphatase that negatively regulates oligodendrocyte precursor proliferation in the embryonic spinal cord. Required for normal differentiation of the precursor cells into mature, fully myelinating oligodendrocytes. May play a role in protecting oligondendrocytes against apoptosis. May play a role in the establishment of contextual memory, probably via the dephosphorylation of proteins that are part of important signaling cascades. Its function is as follows. Isoform 3 (phosphacan), previously designated 3F8 chondroitin sulfate proteoglycan or 3H1 keratan sulfate proteoglycan depending on the glycosylation status, is a soluble nervous tissue-specific proteoglycan. It is synthesized by glia and binds to neurons and to the neural cell adhesion molecules tenascin, N-CAM or NG-CAM but not to laminin and fibronectin. Phosphacan acts as a potent inhibitor of cell adhesion and neurite outgrowth. This is Receptor-type tyrosine-protein phosphatase zeta (Ptprz1) from Rattus norvegicus (Rat).